The chain runs to 269 residues: Glutamate racemase (269 aa).

Substrate contacts are provided by residues 11-12 and 43-44; these read DS and YG. Cysteine 74 (proton donor/acceptor) is an active-site residue. 75–76 contributes to the substrate binding site; sequence NT. Cysteine 185 acts as the Proton donor/acceptor in catalysis. 186 to 187 contacts substrate; the sequence is TH.

This sequence belongs to the aspartate/glutamate racemases family.

It carries out the reaction L-glutamate = D-glutamate. It functions in the pathway cell wall biogenesis; peptidoglycan biosynthesis. Functionally, provides the (R)-glutamate required for cell wall biosynthesis. The polypeptide is Glutamate racemase (Bacillus cereus (strain ATCC 10987 / NRS 248)).